We begin with the raw amino-acid sequence, 219 residues long: Peptide methionine sulfoxide reductase MsrA (219 aa).

The segment at 1 to 20 (MGLFRSPRQNLPTAADALPG) is disordered. C55 is a catalytic residue.

Belongs to the MsrA Met sulfoxide reductase family.

The catalysed reaction is L-methionyl-[protein] + [thioredoxin]-disulfide + H2O = L-methionyl-(S)-S-oxide-[protein] + [thioredoxin]-dithiol. It carries out the reaction [thioredoxin]-disulfide + L-methionine + H2O = L-methionine (S)-S-oxide + [thioredoxin]-dithiol. Functionally, has an important function as a repair enzyme for proteins that have been inactivated by oxidation. Catalyzes the reversible oxidation-reduction of methionine sulfoxide in proteins to methionine. This chain is Peptide methionine sulfoxide reductase MsrA, found in Rhodospirillum centenum (strain ATCC 51521 / SW).